The primary structure comprises 186 residues: Probable nicotinate-nucleotide adenylyltransferase (186 aa).

This sequence belongs to the NadD family.

The enzyme catalyses nicotinate beta-D-ribonucleotide + ATP + H(+) = deamido-NAD(+) + diphosphate. It functions in the pathway cofactor biosynthesis; NAD(+) biosynthesis; deamido-NAD(+) from nicotinate D-ribonucleotide: step 1/1. Functionally, catalyzes the reversible adenylation of nicotinate mononucleotide (NaMN) to nicotinic acid adenine dinucleotide (NaAD). In Tropheryma whipplei (strain TW08/27) (Whipple's bacillus), this protein is Probable nicotinate-nucleotide adenylyltransferase.